Consider the following 337-residue polypeptide: MSEPRKLEVLRAIVEDYVHSREPVGSKALVERHHLGVSSATIRNDMAALEDEGLITAPHTSAGRIPTDKGYRLFVDQISAVKPLSQAERRAIQSLLEGSDDLDDVLDRTVRLLSQLTNQVAVVQYPHLSRALIRHIEFVLLAPRKVLVVLIANSGNVEQRVIDVGQDLADDALSALRTRFLGTLAGTPLARLAQALPAVVSSVSPGERQAAQALAHALEILAHSSREDRMVMAGTANLARSNVDFPLSIGPVLEALEEQVVMLRLLSDMAQDHRGVAVSIGRENPYDGLAEASVVATGYGPDSVAKIGILGPTRMDYPNTMAAVRAVARYLSRILGP.

It belongs to the HrcA family.

Functionally, negative regulator of class I heat shock genes (grpE-dnaK-dnaJ and groELS operons). Prevents heat-shock induction of these operons. The polypeptide is Heat-inducible transcription repressor HrcA (Pseudarthrobacter chlorophenolicus (strain ATCC 700700 / DSM 12829 / CIP 107037 / JCM 12360 / KCTC 9906 / NCIMB 13794 / A6) (Arthrobacter chlorophenolicus)).